A 258-amino-acid chain; its full sequence is Homeobox protein VENTX (258 aa).

The segment covering 1-32 (MRLSSSPPRGPQQLSSFGSVDWLSQSSCSGPT) has biased composition (polar residues). Disordered stretches follow at residues 1 to 93 (MRLS…RAPR) and 227 to 248 (SHPP…PRGL). The segment at residues 91–150 (APRVRTAFTMEQVRTLEGVFQHHQYLSPLERKRLAREMQLSEVQIKTWFQNRRMKHKRQM) is a DNA-binding region (homeobox).

In terms of tissue distribution, expressed in bone marrow of patients recovering from chemotherapy. Also expressed in an erythroleukemia cell line.

Its subcellular location is the nucleus. Functionally, may be involved in ventralization. This is Homeobox protein VENTX (VENTX) from Homo sapiens (Human).